Here is a 599-residue protein sequence, read N- to C-terminus: Elongation factor 4 (599 aa).

The tr-type G domain occupies 5 to 187 (SHIRNFSIIA…HLVRVIPPPQ (183 aa)). GTP-binding positions include 17–22 (DHGKST) and 134–137 (NKMD).

It belongs to the TRAFAC class translation factor GTPase superfamily. Classic translation factor GTPase family. LepA subfamily.

It is found in the cell inner membrane. The enzyme catalyses GTP + H2O = GDP + phosphate + H(+). Required for accurate and efficient protein synthesis under certain stress conditions. May act as a fidelity factor of the translation reaction, by catalyzing a one-codon backward translocation of tRNAs on improperly translocated ribosomes. Back-translocation proceeds from a post-translocation (POST) complex to a pre-translocation (PRE) complex, thus giving elongation factor G a second chance to translocate the tRNAs correctly. Binds to ribosomes in a GTP-dependent manner. This chain is Elongation factor 4, found in Azotobacter vinelandii (strain DJ / ATCC BAA-1303).